The chain runs to 327 residues: Methionine import ATP-binding protein MetN (327 aa).

Positions 3–239 (VELKNIEKIY…PKHAVTKELL (237 aa)) constitute an ABC transporter domain. Residue 36-43 (GYSGAGKS) participates in ATP binding.

Belongs to the ABC transporter superfamily. Methionine importer (TC 3.A.1.24) family. The complex is composed of two ATP-binding proteins (MetN), two transmembrane proteins (MetI) and a solute-binding protein (MetQ).

Its subcellular location is the cell inner membrane. The catalysed reaction is L-methionine(out) + ATP + H2O = L-methionine(in) + ADP + phosphate + H(+). It carries out the reaction D-methionine(out) + ATP + H2O = D-methionine(in) + ADP + phosphate + H(+). In terms of biological role, part of the ABC transporter complex MetNIQ involved in methionine import. Responsible for energy coupling to the transport system. This Helicobacter pylori (strain HPAG1) protein is Methionine import ATP-binding protein MetN.